A 413-amino-acid polypeptide reads, in one-letter code: Arginine biosynthesis bifunctional protein ArgJ (413 aa).

Positions 158, 184, 195, 285, 408, and 413 each coordinate substrate. Catalysis depends on threonine 195, which acts as the Nucleophile.

It belongs to the ArgJ family. As to quaternary structure, heterotetramer of two alpha and two beta chains.

It is found in the cytoplasm. The catalysed reaction is N(2)-acetyl-L-ornithine + L-glutamate = N-acetyl-L-glutamate + L-ornithine. The enzyme catalyses L-glutamate + acetyl-CoA = N-acetyl-L-glutamate + CoA + H(+). The protein operates within amino-acid biosynthesis; L-arginine biosynthesis; L-ornithine and N-acetyl-L-glutamate from L-glutamate and N(2)-acetyl-L-ornithine (cyclic): step 1/1. It participates in amino-acid biosynthesis; L-arginine biosynthesis; N(2)-acetyl-L-ornithine from L-glutamate: step 1/4. Catalyzes two activities which are involved in the cyclic version of arginine biosynthesis: the synthesis of N-acetylglutamate from glutamate and acetyl-CoA as the acetyl donor, and of ornithine by transacetylation between N(2)-acetylornithine and glutamate. The sequence is that of Arginine biosynthesis bifunctional protein ArgJ from Agrobacterium fabrum (strain C58 / ATCC 33970) (Agrobacterium tumefaciens (strain C58)).